The primary structure comprises 494 residues: Alpha-amylase (494 aa).

The N-terminal stretch at 1–26 (MQISKAALLASLAALVYAQPVTLFKR) is a signal peptide. Residues cysteine 57 and cysteine 65 are joined by a disulfide bond. A substrate-binding site is contributed by tryptophan 110. Position 148 (asparagine 148) interacts with Ca(2+). Residue histidine 149 coordinates substrate. Cysteine 177 and cysteine 191 are joined by a disulfide. Residue aspartate 202 participates in Ca(2+) binding. A glycan (N-linked (GlcNAc...) asparagine) is linked at asparagine 224. Residue arginine 231 participates in substrate binding. Ca(2+)-binding residues include aspartate 233, histidine 237, and glutamate 257. Catalysis depends on aspartate 233, which acts as the Nucleophile. A substrate-binding site is contributed by 236–237 (KH). Residue glutamate 257 is the Proton donor of the active site. Glycine 261 provides a ligand contact to substrate. The cysteines at positions 267 and 310 are disulfide-linked. The substrate site is built by aspartate 324 and arginine 371. A disulfide bridge connects residues cysteine 462 and cysteine 493.

It belongs to the glycosyl hydrolase 13 family. Requires Ca(2+) as cofactor.

Its subcellular location is the secreted. It carries out the reaction Endohydrolysis of (1-&gt;4)-alpha-D-glucosidic linkages in polysaccharides containing three or more (1-&gt;4)-alpha-linked D-glucose units.. The sequence is that of Alpha-amylase (ALP1) from Saccharomycopsis fibuligera (Yeast).